Reading from the N-terminus, the 436-residue chain is Ribulose bisphosphate carboxylase large chain (436 aa).

Substrate-binding residues include Asn-104 and Thr-154. Catalysis depends on Lys-156, which acts as the Proton acceptor. Residue Lys-158 coordinates substrate. The Mg(2+) site is built by Lys-182, Asp-184, and Glu-185. N6-carboxylysine is present on Lys-182. His-275 acts as the Proton acceptor in catalysis. The substrate site is built by Arg-276, His-308, and Ser-360.

This sequence belongs to the RuBisCO large chain family. Type I subfamily. Heterohexadecamer of 8 large chains and 8 small chains. The cofactor is Mg(2+).

It is found in the plastid. The protein localises to the chloroplast. It catalyses the reaction 2 (2R)-3-phosphoglycerate + 2 H(+) = D-ribulose 1,5-bisphosphate + CO2 + H2O. It carries out the reaction D-ribulose 1,5-bisphosphate + O2 = 2-phosphoglycolate + (2R)-3-phosphoglycerate + 2 H(+). In terms of biological role, ruBisCO catalyzes two reactions: the carboxylation of D-ribulose 1,5-bisphosphate, the primary event in carbon dioxide fixation, as well as the oxidative fragmentation of the pentose substrate in the photorespiration process. Both reactions occur simultaneously and in competition at the same active site. This Euglena myxocylindracea protein is Ribulose bisphosphate carboxylase large chain.